A 455-amino-acid polypeptide reads, in one-letter code: Elongation factor Tu, mitochondrial (455 aa).

A mitochondrion-targeting transit peptide spans 1 to 46; the sequence is MTTMAAATLLRATPHFSGLAAGRTFLLQGLLRLLKAPALPLLCRGL. The tr-type G domain occupies 58 to 254; the sequence is KPHVNVGTIG…AVDTYIPVPA (197 aa). The segment at 67–74 is G1; it reads GHVDHGKT. The GTP site is built by Asp70, Gly72, Lys73, Thr74, and Thr75. Position 74 (Thr74) interacts with Mg(2+). An N6-acetyllysine modification is found at Lys82. Position 91 is an N6-acetyllysine; alternate (Lys91). Lys91 carries the post-translational modification N6-succinyllysine; alternate. A G2 region spans residues 108-112; sequence GITIN. The G3 stretch occupies residues 129 to 132; the sequence is DCPG. Residues Asn184, Asp187, Ser222, Ala223, and Leu224 each coordinate GTP. A G4 region spans residues 184–187; the sequence is NKAD. Residues 222-224 are G5; it reads SAL. Residue Lys237 is modified to N6-succinyllysine. Lys259 carries the N6-acetyllysine modification. Thr281 is subject to Phosphothreonine. Lys289 is modified (N6-succinyllysine). Position 315 is a phosphoserine (Ser315). Lys364 and Lys421 each carry N6-acetyllysine.

This sequence belongs to the TRAFAC class translation factor GTPase superfamily. Classic translation factor GTPase family. EF-Tu/EF-1A subfamily. As to quaternary structure, interacts with NLRX1. Interacts with ATG16L1. (Microbial infection) Interacts with human parainfluenza virus 3 matrix protein; this interaction inhibits RLR-mediated type I interferon production while promoting autophagy. In terms of assembly, (Microbial infection) Interacts with Hantaan hantavirus glycoprotein N; this interaction contributes to the virus-induced degradation of mitochondria by autophagy, which leads to degradation of MAVS and inhibition of type I interferon (IFN) responses.

It is found in the mitochondrion. It carries out the reaction GTP + H2O = GDP + phosphate + H(+). Functionally, GTP hydrolase that promotes the GTP-dependent binding of aminoacyl-tRNA to the A-site of ribosomes during protein biosynthesis. Also plays a role in the regulation of autophagy and innate immunity. Recruits ATG5-ATG12 and NLRX1 at mitochondria and serves as a checkpoint of the RIGI-MAVS pathway. In turn, inhibits RLR-mediated type I interferon while promoting autophagy. The polypeptide is Elongation factor Tu, mitochondrial (TUFM) (Homo sapiens (Human)).